Consider the following 273-residue polypeptide: Undecaprenyl-diphosphatase (273 aa).

8 helical membrane passes run 3–23 (IVEI…EFAP), 48–68 (AANT…VVVF), 92–112 (MQVI…EDYI), 116–136 (LFST…MIAA), 152–172 (ITYK…WPGF), 193–213 (ADFT…LSLL), 220–240 (TIDA…FALI), and 252–272 (IRLV…YIVY).

This sequence belongs to the UppP family.

The protein localises to the cell membrane. It carries out the reaction di-trans,octa-cis-undecaprenyl diphosphate + H2O = di-trans,octa-cis-undecaprenyl phosphate + phosphate + H(+). Functionally, catalyzes the dephosphorylation of undecaprenyl diphosphate (UPP). Confers resistance to bacitracin. This chain is Undecaprenyl-diphosphatase, found in Geobacillus sp. (strain WCH70).